Reading from the N-terminus, the 753-residue chain is Rsm22-cox11 tandem protein 1, mitochondrial (753 aa).

The transit peptide at 1–39 (MPILTCRYKILFLYNLRNCFTFQNQRCLIPYGTTTTIRW) directs the protein to the mitochondrion. Residues Cys323, Cys329, Cys342, and Cys430 each contribute to the [4Fe-4S] cluster site. A helical membrane pass occupies residues 571–591 (IYYLVAISIFALGLTYAAVPL). At 592-753 (YRLFCSKTGY…TNGNLLTKLN (162 aa)) the chain is on the mitochondrial intermembrane side.

It in the N-terminal section; belongs to the methyltransferase superfamily. Rsm22 family. The protein in the C-terminal section; belongs to the COX11/CtaG family. As to quaternary structure, associates with the mitochondrial ribosome (mitoribosome). Only transiently interacts with the mitoribosome. Specific enzymatic cleavages in vivo by mitochondrial processing peptidase (MPP) yield mature proteins including rsm22-1 and cox11-1.

The protein resides in the mitochondrion. Its subcellular location is the mitochondrion inner membrane. Functionally, mitochondrial ribosome (mitoribosome) assembly factor. Binds at the interface of the head and body domains of the mitochondrial small ribosomal subunit (mt-SSU), occluding the mRNA channel and preventing compaction of the head domain towards the body. Probable inactive methyltransferase: retains the characteristic folding and ability to bind S-adenosyl-L-methionine, but it probably lost its methyltransferase activity. Exerts its effect at some terminal stage of cytochrome c oxidase synthesis, probably by being involved in the insertion of the copper B into subunit I. The chain is Rsm22-cox11 tandem protein 1, mitochondrial (cox1101) from Schizosaccharomyces pombe (strain 972 / ATCC 24843) (Fission yeast).